The chain runs to 330 residues: Flotillin-like protein FloA (330 aa).

Helical transmembrane passes span 6 to 26 (LLLFVIIAAGLIVLSIFFTFV) and 28 to 48 (VMLWISALAAGVRVSIFTLVG).

Belongs to the flotillin-like FloA family. Homooligomerizes.

It localises to the cell membrane. It is found in the membrane raft. In terms of biological role, found in functional membrane microdomains (FMM) that may be equivalent to eukaryotic membrane rafts. FMMs are highly dynamic and increase in number as cells age. Flotillins are thought to be important factors in membrane fluidity. This is Flotillin-like protein FloA from Bacillus pumilus (strain SAFR-032).